A 121-amino-acid polypeptide reads, in one-letter code: Small ribosomal subunit protein uS13 (121 aa).

Residues 93–121 (RKGLPVRGQKTKTNARTRKGKRKTVGAKS) form a disordered region.

Belongs to the universal ribosomal protein uS13 family. In terms of assembly, part of the 30S ribosomal subunit. Forms a loose heterodimer with protein S19. Forms two bridges to the 50S subunit in the 70S ribosome.

Located at the top of the head of the 30S subunit, it contacts several helices of the 16S rRNA. In the 70S ribosome it contacts the 23S rRNA (bridge B1a) and protein L5 of the 50S subunit (bridge B1b), connecting the 2 subunits; these bridges are implicated in subunit movement. Contacts the tRNAs in the A and P-sites. This is Small ribosomal subunit protein uS13 from Campylobacter lari (strain RM2100 / D67 / ATCC BAA-1060).